The chain runs to 314 residues: tRNA uridine(34) hydroxylase (314 aa).

Residues 135 to 229 enclose the Rhodanese domain; that stretch reads ADPETLVIDT…YLEQIPAEES (95 aa). Catalysis depends on cysteine 189, which acts as the Cysteine persulfide intermediate.

Belongs to the TrhO family.

It catalyses the reaction uridine(34) in tRNA + AH2 + O2 = 5-hydroxyuridine(34) in tRNA + A + H2O. In terms of biological role, catalyzes oxygen-dependent 5-hydroxyuridine (ho5U) modification at position 34 in tRNAs. This is tRNA uridine(34) hydroxylase from Sinorhizobium fredii (strain NBRC 101917 / NGR234).